We begin with the raw amino-acid sequence, 1103 residues long: DNA polymerase delta catalytic subunit (1103 aa).

The tract at residues Met-1–Ser-29 is disordered. The Nuclear localization signal signature appears at Lys-4–Arg-19. Omega-N-methylarginine is present on Arg-19. A Glycyl lysine isopeptide (Lys-Gly) (interchain with G-Cter in SUMO2) cross-link involves residue Lys-570. 4 residues coordinate Zn(2+): Cys-1008, Cys-1011, Cys-1022, and Cys-1025. The segment at Cys-1008–Cys-1025 adopts a CysA-type zinc-finger fold. The [4Fe-4S] cluster site is built by Cys-1054, Cys-1057, Cys-1067, and Cys-1072. Positions Cys-1054–Cys-1072 match the CysB motif motif.

Belongs to the DNA polymerase type-B family. In terms of assembly, component of the tetrameric DNA polymerase delta complex (Pol-delta4), which consists of POLD1/p125, POLD2/p50, POLD3/p66/p68 and POLD4/p12, with POLD1 bearing both DNA polymerase and 3' to 5' proofreading exonuclease activities. Within Pol-delta4, directly interacts with POLD2 and POLD4. Following genotoxic stress by DNA-damaging agents, such as ultraviolet light and methyl methanesulfonate, or by replication stress induced by treatment with hydroxyurea or aphidicolin, Pol-delta4 is converted into a trimeric form of the complex (Pol-delta3) by POLD4 degradation. Pol-delta3 is the major form at S phase replication sites and DNA damage sites. POLD1 displays different catalytic properties depending upon the complex it is found in. It exhibits higher proofreading activity and fidelity than Pol-delta4, making it particularly well suited to respond to DNA damage. Directly interacts with PCNA, as do POLD3 and POLD4; this interaction stimulates Pol-delta4 polymerase activity. As POLD2 and POLD4, directly interacts with WRNIP1; this interaction stimulates DNA polymerase delta-mediated DNA synthesis, independently of the presence of PCNA. This stimulation may be due predominantly to an increase of initiation frequency and also to increased processivity. Also observed as a dimeric complex with POLD2 (Pol-delta2). Pol-delta2 is relatively insensitive to the PCNA stimulation (2-5-fold) compared to Pol-delta4 that is stimulated by over 50-fold. The DNA polymerase delta complex interacts with POLDIP2; this interaction is probably mediated through direct binding to POLD2. Interacts with CIAO1. Interacts with POLDIP2. Interacts with RFC1. [4Fe-4S] cluster is required as a cofactor.

Its subcellular location is the nucleus. It catalyses the reaction DNA(n) + a 2'-deoxyribonucleoside 5'-triphosphate = DNA(n+1) + diphosphate. Regulated by alteration of quaternary structure. Exhibits burst rates of DNA synthesis are about 5 times faster in the presence of POLD4 (Pol-delta4 complex) than in its absence (Pol-delta3 complex), while the affinity of the enzyme for its DNA and dNTP substrates appears unchanged. The Pol-delta3 complex is more likely to proofread DNA synthesis because it cleaves single-stranded DNA twice as fast and transfers mismatched DNA from the polymerase to the exonuclease sites 9 times faster compared to the Pol-delta3 complex. Pol-delta3 also extends mismatched primers 3 times more slowly in the absence of POLD4. The conversion of Pol-delta4 into Pol-delta3 is induced by genotoxic stress or by replication stress leading POLD4 degradation. Stimulated in the presence of PCNA. This stimulation is further increased in the presence of KCTD13/PDIP1, most probably via direct interaction between KCTD13 and POLD2. Functionally, as the catalytic component of the trimeric (Pol-delta3 complex) and tetrameric DNA polymerase delta complexes (Pol-delta4 complex), plays a crucial role in high fidelity genome replication, including in lagging strand synthesis, and repair. Exhibits both DNA polymerase and 3'- to 5'-exonuclease activities. Requires the presence of accessory proteins POLD2, POLD3 and POLD4 for full activity. Depending upon the absence (Pol-delta3) or the presence of POLD4 (Pol-delta4), displays differences in catalytic activity. Most notably, expresses higher proofreading activity in the context of Pol-delta3 compared with that of Pol-delta4. Although both Pol-delta3 and Pol-delta4 process Okazaki fragments in vitro, Pol-delta3 may be better suited to fulfill this task, exhibiting near-absence of strand displacement activity compared to Pol-delta4 and stalling on encounter with the 5'-blocking oligonucleotides. Pol-delta3 idling process may avoid the formation of a gap, while maintaining a nick that can be readily ligated. Along with DNA polymerase kappa, DNA polymerase delta carries out approximately half of nucleotide excision repair (NER) synthesis following UV irradiation. Under conditions of DNA replication stress, in the presence of POLD3 and POLD4, may catalyze the repair of broken replication forks through break-induced replication (BIR). Involved in the translesion synthesis (TLS) of templates carrying O6-methylguanine, 8oxoG or abasic sites. The chain is DNA polymerase delta catalytic subunit (POLD1) from Mesocricetus auratus (Golden hamster).